Here is a 149-residue protein sequence, read N- to C-terminus: D-aminoacyl-tRNA deacylase (149 aa).

Residues 137–138 (GP) carry the Gly-cisPro motif, important for rejection of L-amino acids motif.

This sequence belongs to the DTD family. In terms of assembly, homodimer.

Its subcellular location is the cytoplasm. The enzyme catalyses glycyl-tRNA(Ala) + H2O = tRNA(Ala) + glycine + H(+). It catalyses the reaction a D-aminoacyl-tRNA + H2O = a tRNA + a D-alpha-amino acid + H(+). Its function is as follows. An aminoacyl-tRNA editing enzyme that deacylates mischarged D-aminoacyl-tRNAs. Also deacylates mischarged glycyl-tRNA(Ala), protecting cells against glycine mischarging by AlaRS. Acts via tRNA-based rather than protein-based catalysis; rejects L-amino acids rather than detecting D-amino acids in the active site. By recycling D-aminoacyl-tRNA to D-amino acids and free tRNA molecules, this enzyme counteracts the toxicity associated with the formation of D-aminoacyl-tRNA entities in vivo and helps enforce protein L-homochirality. The sequence is that of D-aminoacyl-tRNA deacylase from Clostridium botulinum (strain Alaska E43 / Type E3).